Here is a 259-residue protein sequence, read N- to C-terminus: Polycomb group RING finger protein 1 (259 aa).

Position 2 is an N-acetylalanine (Ala-2). Position 3 is a phosphoserine (Ser-3). Lys-24 is covalently cross-linked (Glycyl lysine isopeptide (Lys-Gly) (interchain with G-Cter in SUMO2)). The RING-type zinc-finger motif lies at 47–86 (CCLCAGYFVDATTITECLHTFCKSCIVKYLQTSKYCPMCN). A required for repressor activity region spans residues 86-247 (NIKIHETQPL…LSRWFGKPSP (162 aa)). Residue Lys-88 forms a Glycyl lysine isopeptide (Lys-Gly) (interchain with G-Cter in SUMO2) linkage. Positions 150–255 (LPFSSFDHSK…SPLLLQYSVK (106 aa)) are required for the interaction with the KDM2B-SKP1 heterodimeric complex. The interval 167–255 (EQLNLCLERL…SPLLLQYSVK (89 aa)) is RING-finger and WD40-associated ubiquitin-like domain (RAWUL); sufficient for interaction with BCOR and BCORL1.

In terms of assembly, interacts with BCORL1, forming heterodimers. The PCGF1-BCORL1 heterodimeric complex interacts with the KDM2B-SKP1 heterodimeric complex to form a homotetrameric polycomb repression complex 1 (PRC1.1). Component of the repressive BCOR complex containing a Polycomb group subcomplex at least composed of RYBP, RING1 and RNF2/RING2. Specifically interacts with BCOR, RING1 and RNF2/RING2. Component of a PRC1-like complex. Interacts with CBX6, CBX7 and CBX8. Interacts with DPPA4, NANOG, POU5F1 and RYBP. Ubiquitous.

It localises to the nucleus. Its function is as follows. Component of the Polycomb group (PcG) multiprotein BCOR complex, a complex required to maintain the transcriptionally repressive state of some genes, such as BCL6 and the cyclin-dependent kinase inhibitor, CDKN1A. Transcriptional repressor that may be targeted to the DNA by BCL6; this transcription repressor activity may be related to PKC signaling pathway. Represses CDKN1A expression by binding to its promoter, and this repression is dependent on the retinoic acid response element (RARE element). Promotes cell cycle progression and enhances cell proliferation as well. May have a positive role in tumor cell growth by down-regulating CDKN1A. Component of a Polycomb group (PcG) multiprotein PRC1-like complex, a complex class required to maintain the transcriptionally repressive state of many genes, including Hox genes, throughout development. PcG PRC1 complex acts via chromatin remodeling and modification of histones; it mediates monoubiquitination of histone H2A 'Lys-119', rendering chromatin heritably changed in its expressibility. Within the PRC1-like complex, regulates RNF2 ubiquitin ligase activity. Regulates the expression of DPPA4 and NANOG in the NT2 embryonic carcinoma cells. The sequence is that of Polycomb group RING finger protein 1 (PCGF1) from Homo sapiens (Human).